Consider the following 335-residue polypeptide: Cytoplasmic envelopment protein 2 (335 aa).

The protein belongs to the herpesviridae cytoplasmic envelopment protein 2 family. Interacts with cytoplasmic envelopment protein 3 and with the capsid.

The protein localises to the virion tegument. The protein resides in the host cytoplasm. Its subcellular location is the host nucleus. Plays a critical role in cytoplasmic virus egress. Participates in the final step of tegumentation and envelope acquisition within the host cytoplasm by directly interacting with the capsid. Upon virion binding to target cell, a signaling cascade is triggered to disrupt the interaction with the capsid, thereby preparing capsid uncoating. The sequence is that of Cytoplasmic envelopment protein 2 (U65) from Human herpesvirus 6A (strain Uganda-1102) (HHV-6 variant A).